A 662-amino-acid chain; its full sequence is Transforming growth factor beta activator LRRC32 (662 aa).

The N-terminal stretch at 1–17 is a signal peptide; it reads MRPQILLLLALLTLGLA. The Extracellular portion of the chain corresponds to 18–625; sequence AQRQDKVPCK…EDCEKGGLKN (608 aa). Residues 21–48 form the LRRNT domain; it reads QDKVPCKMVDKKVSCQGLGLLQVPSVLP. LRR repeat units follow at residues 50 to 73, 74 to 95, 98 to 119, 125 to 145, 150 to 171, 174 to 195, 198 to 219, 220 to 240, 244 to 265, and 266 to 286; these read DTET…GFYT, ALRH…AFQA, HLEH…SAGG, RVTS…ERLL, SLHT…TFRD, VLEQ…AFEG, RLTH…SLQQ, LRVL…SQPQ, QLTW…AALP, and RLIY…PPQD. N-linked (GlcNAc...) asparagine glycosylation is present at Asn203. Asn271 and Asn308 each carry an N-linked (GlcNAc...) asparagine glycan. 10 LRR repeats span residues 316–339, 340–361, 364–385, 387–408, 411–432, 444–465, 467–488, 492–513, 515–536, and 537–558; these read QLLN…EHLT, SLCF…RSGS, CLML…ARAL, SLRT…TFAN, SLQR…DEPG, SLHS…AFLH, PLTE…ALGG, SLEV…LPCF, CLKR…TQAV, and SLEV…AMGG. An N-linked (GlcNAc...) asparagine glycan is attached at Asn345. Asn545 is a glycosylation site (N-linked (GlcNAc...) asparagine). The LRRCT domain maps to 571–620; it reads NPLSCCGNGWLAAQLHQGRVDVDATQDLICRFSSQEEVSLSHVRPEDCEK. Residues 626-646 traverse the membrane as a helical segment; that stretch reads INLIIILTFILVSAILLTTLA. Residues 647–662 lie on the Cytoplasmic side of the membrane; it reads TCCCVRRQKFNQQYKA.

This sequence belongs to the LRRC32/LRRC33 family. In terms of assembly, interacts with TGFB1; associates via disulfide bonds with the Latency-associated peptide chain (LAP) regulatory chain of TGFB1, leading to regulate activation of TGF-beta-1. Interacts with TGFB2. Interacts with TGFB3; associates via disulfide bonds with the Latency-associated peptide chain (LAP) regulatory chain of TGFB3, leading to regulate activation of TGF-beta-3. Interacts with LAPTM4B; decreases TGFB1 production in regulatory T-cells.

The protein localises to the cell membrane. It localises to the cell surface. Key regulator of transforming growth factor beta (TGFB1, TGFB2 and TGFB3) that controls TGF-beta activation by maintaining it in a latent state during storage in extracellular space. Associates specifically via disulfide bonds with the Latency-associated peptide (LAP), which is the regulatory chain of TGF-beta, and regulates integrin-dependent activation of TGF-beta. Able to outcompete LTBP1 for binding to LAP regulatory chain of TGF-beta. Controls activation of TGF-beta-1 (TGFB1) on the surface of activated regulatory T-cells (Tregs). Required for epithelial fusion during palate development by regulating activation of TGF-beta-3 (TGFB3). The chain is Transforming growth factor beta activator LRRC32 from Pongo abelii (Sumatran orangutan).